Here is a 913-residue protein sequence, read N- to C-terminus: DNA polymerase I (913 aa).

The 305-residue stretch at 1–305 folds into the 5'-3' exonuclease domain; sequence MSQAPLVLVD…AGENGEAETP (305 aa). A 3'-5' exonuclease domain is found at 306–501; that stretch reads IQAEVDYDVV…LHQALWQKLE (196 aa). The tract at residues 505 to 913 is polymerase; that stretch reads SLARVLTDIE…GVGSNWDEAH (409 aa).

This sequence belongs to the DNA polymerase type-A family. In terms of assembly, single-chain monomer with multiple functions.

It catalyses the reaction DNA(n) + a 2'-deoxyribonucleoside 5'-triphosphate = DNA(n+1) + diphosphate. Functionally, in addition to polymerase activity, this DNA polymerase exhibits 3'-5' and 5'-3' exonuclease activity. This chain is DNA polymerase I (polA), found in Pseudomonas aeruginosa (strain ATCC 15692 / DSM 22644 / CIP 104116 / JCM 14847 / LMG 12228 / 1C / PRS 101 / PAO1).